Reading from the N-terminus, the 598-residue chain is Transcription factor COE3 (598 aa).

The segment at 1 to 23 (MFGIQENIPRGGTTMKEEPLGGG) is disordered. The tract at residues 63–66 (RKSN) is interaction with DNA. The C5-type zinc finger occupies 151-170 (CRVLLTHEIMCSRCCDKKSC). 2 interaction with DNA regions span residues 197 to 204 (NCLKNAGN) and 236 to 239 (NNSK). Residues 264-347 (PCIKAISPSE…KGAPGRFVYT (84 aa)) enclose the IPT/TIG domain. Residues 452–483 (TSQANDQVGYSRNTSSVSPRGYVPSSTPQQSN) form a disordered region.

It belongs to the COE family. In terms of assembly, forms either a homodimer or a heterodimer with a related family member.

The protein localises to the nucleus. In terms of biological role, acts as a transcriptional activator. The protein is Transcription factor COE3 (coe3) of Xenopus laevis (African clawed frog).